A 241-amino-acid chain; its full sequence is tRNA pseudouridine synthase A (241 aa).

Asp-52 serves as the catalytic Nucleophile. Tyr-111 contacts substrate.

It belongs to the tRNA pseudouridine synthase TruA family. In terms of assembly, homodimer.

It carries out the reaction uridine(38/39/40) in tRNA = pseudouridine(38/39/40) in tRNA. Formation of pseudouridine at positions 38, 39 and 40 in the anticodon stem and loop of transfer RNAs. This Ureaplasma parvum serovar 3 (strain ATCC 27815 / 27 / NCTC 11736) protein is tRNA pseudouridine synthase A.